The sequence spans 284 residues: 2-dehydro-3-deoxyphosphooctonate aldolase (284 aa).

The protein belongs to the KdsA family.

It is found in the cytoplasm. It catalyses the reaction D-arabinose 5-phosphate + phosphoenolpyruvate + H2O = 3-deoxy-alpha-D-manno-2-octulosonate-8-phosphate + phosphate. The protein operates within carbohydrate biosynthesis; 3-deoxy-D-manno-octulosonate biosynthesis; 3-deoxy-D-manno-octulosonate from D-ribulose 5-phosphate: step 2/3. It functions in the pathway bacterial outer membrane biogenesis; lipopolysaccharide biosynthesis. This Vibrio atlanticus (strain LGP32) (Vibrio splendidus (strain Mel32)) protein is 2-dehydro-3-deoxyphosphooctonate aldolase.